We begin with the raw amino-acid sequence, 910 residues long: Protein translocase subunit SecA (910 aa).

Residues Gln89, 107-111 (GEGKT), and Asp496 contribute to the ATP site. A disordered region spans residues 873–910 (QEFSGGNLNRSQSNGSSVTVTTSSGGGTERKTSRRRKR). The span at 876-886 (SGGNLNRSQSN) shows a compositional bias: polar residues.

This sequence belongs to the SecA family. In terms of assembly, monomer and homodimer. Part of the essential Sec protein translocation apparatus which comprises SecA, SecYEG and auxiliary proteins SecDF. Other proteins may also be involved.

It is found in the cell inner membrane. Its subcellular location is the cytoplasm. The catalysed reaction is ATP + H2O + cellular proteinSide 1 = ADP + phosphate + cellular proteinSide 2.. Functionally, part of the Sec protein translocase complex. Interacts with the SecYEG preprotein conducting channel. Has a central role in coupling the hydrolysis of ATP to the transfer of proteins into and across the cell membrane, serving as an ATP-driven molecular motor driving the stepwise translocation of polypeptide chains across the membrane. This is Protein translocase subunit SecA from Leptospira interrogans serogroup Icterohaemorrhagiae serovar copenhageni (strain Fiocruz L1-130).